A 140-amino-acid chain; its full sequence is Large ribosomal subunit protein bL17 (140 aa).

The protein belongs to the bacterial ribosomal protein bL17 family. In terms of assembly, part of the 50S ribosomal subunit. Contacts protein L32.

The chain is Large ribosomal subunit protein bL17 from Methylobacterium nodulans (strain LMG 21967 / CNCM I-2342 / ORS 2060).